A 316-amino-acid polypeptide reads, in one-letter code: Pantothenate kinase (316 aa).

ATP is bound at residue 95-102 (GSVAVGKS).

This sequence belongs to the prokaryotic pantothenate kinase family.

It localises to the cytoplasm. It carries out the reaction (R)-pantothenate + ATP = (R)-4'-phosphopantothenate + ADP + H(+). It functions in the pathway cofactor biosynthesis; coenzyme A biosynthesis; CoA from (R)-pantothenate: step 1/5. The chain is Pantothenate kinase from Escherichia coli O17:K52:H18 (strain UMN026 / ExPEC).